Here is a 158-residue protein sequence, read N- to C-terminus: MKISTTRFGMIEISESDIILMRRGILGFEESKKYALLYQDVKNPFLWFQSLDDGATAFVVIDPFLLQPYYQPELNDDTLEKLEIDNPEDVALMVIVSIRSNPVLLTANLRAPIVINAAKKKACQVVLEDSRFPIRYDILKNREFLLGGHCYEISATAP.

Belongs to the FliW family. Interacts with translational regulator CsrA and flagellin(s).

The protein resides in the cytoplasm. In terms of biological role, acts as an anti-CsrA protein, binds CsrA and prevents it from repressing translation of its target genes, one of which is flagellin. Binds to flagellin and participates in the assembly of the flagellum. This Syntrophus aciditrophicus (strain SB) protein is Flagellar assembly factor FliW.